Here is a 278-residue protein sequence, read N- to C-terminus: UPF0761 membrane protein NT05HA_1801 (278 aa).

The next 6 membrane-spanning stretches (helical) occupy residues 32 to 52 (MLAI…FPVF), 88 to 108 (QMSA…INSI), 123 to 143 (PIFT…LLVG), 168 to 188 (LLSF…YMVV), 203 to 223 (LIAA…IVTF), and 232 to 252 (AMAT…FVLL).

Belongs to the UPF0761 family.

The protein resides in the cell inner membrane. The protein is UPF0761 membrane protein NT05HA_1801 of Aggregatibacter aphrophilus (strain NJ8700) (Haemophilus aphrophilus).